Consider the following 146-residue polypeptide: Hemoglobin subunit beta (146 aa).

Val1 carries the post-translational modification N-acetylvaline. A Globin domain is found at 2–146 (HLTAEEKSAV…VANALAHKYH (145 aa)). Phosphothreonine is present on Thr12. Lys59 carries the post-translational modification N6-acetyllysine. His63 is a binding site for heme b. An N6-acetyllysine modification is found at Lys82. His92 is a heme b binding site. Cys93 is subject to S-nitrosocysteine. Lys144 is subject to N6-acetyllysine.

It belongs to the globin family. Heterotetramer of two alpha chains and two beta chains. Red blood cells.

Involved in oxygen transport from the lung to the various peripheral tissues. The polypeptide is Hemoglobin subunit beta (HBB) (Balaenoptera acutorostrata (Common minke whale)).